The following is a 737-amino-acid chain: Serine/threonine-protein kinase dst1 (737 aa).

In terms of domain architecture, Protein kinase spans Tyr-29 to Ile-281. Residues Leu-35–Val-43 and Lys-58 each bind ATP. Asp-149 acts as the Proton acceptor in catalysis. 4 disordered regions span residues Ser-305–Tyr-356, Lys-372–Gln-475, Lys-491–Asn-559, and Asn-575–Ser-631. Composition is skewed to low complexity over residues Asn-334–Ile-345, Ser-401–Ser-410, Pro-425–Pro-444, and Ala-454–Thr-473. Positions Lys-491–Pro-503 are enriched in polar residues. The segment covering Ser-510–Pro-525 has biased composition (low complexity). Composition is skewed to polar residues over residues Leu-529–Lys-554 and Ser-585–Asn-596. A compositionally biased stretch (low complexity) spans Ser-597–Ser-615.

The protein belongs to the protein kinase superfamily. STE Ser/Thr protein kinase family. STE20 subfamily. Mg(2+) serves as cofactor.

The catalysed reaction is L-seryl-[protein] + ATP = O-phospho-L-seryl-[protein] + ADP + H(+). The enzyme catalyses L-threonyl-[protein] + ATP = O-phospho-L-threonyl-[protein] + ADP + H(+). This Dictyostelium discoideum (Social amoeba) protein is Serine/threonine-protein kinase dst1.